The following is a 126-amino-acid chain: Large ribosomal subunit protein bL19 (126 aa).

This sequence belongs to the bacterial ribosomal protein bL19 family.

In terms of biological role, this protein is located at the 30S-50S ribosomal subunit interface and may play a role in the structure and function of the aminoacyl-tRNA binding site. This is Large ribosomal subunit protein bL19 from Bordetella petrii (strain ATCC BAA-461 / DSM 12804 / CCUG 43448).